The following is a 710-amino-acid chain: Adenylosuccinate synthetase (710 aa).

Disordered stretches follow at residues 1–53 (MPVR…PQEA) and 84–110 (DEPP…SGRS). 2 stretches are compositionally biased toward polar residues: residues 10–27 (YNNS…STTA) and 101–110 (ANASNSSGRS). Residues 180 to 186 (GDEGKGK) and 210 to 212 (GHT) each bind GTP. Residue aspartate 181 is the Proton acceptor of the active site. Aspartate 181 and glycine 210 together coordinate Mg(2+). Residues 181 to 184 (DEGK), 208 to 211 (NAGH), threonine 295, lysine 309, glutamine 421, threonine 437, and lysine 567 contribute to the IMP site. Histidine 211 serves as the catalytic Proton donor. 563–569 (AVTKKPR) contacts substrate. GTP-binding positions include arginine 569 and 697–699 (GNG).

This sequence belongs to the adenylosuccinate synthetase family. In terms of assembly, homodimer. Mg(2+) serves as cofactor.

It localises to the cytoplasm. It catalyses the reaction IMP + L-aspartate + GTP = N(6)-(1,2-dicarboxyethyl)-AMP + GDP + phosphate + 2 H(+). The protein operates within purine metabolism; AMP biosynthesis via de novo pathway; AMP from IMP: step 1/2. Functionally, plays an important role in the salvage pathway for purine nucleotide biosynthesis. Catalyzes the first committed step in the biosynthesis of AMP from IMP. The polypeptide is Adenylosuccinate synthetase (ADSS) (Leishmania donovani).